The chain runs to 575 residues: Manganese transporter SMF1 (575 aa).

Residues 1 to 70 are Extracellular-facing; sequence MVNVGPSHAA…TYVSKRQVMR (70 aa). S24 is subject to Phosphoserine. Residues K33 and K34 each participate in a glycyl lysine isopeptide (Lys-Gly) (interchain with G-Cter in ubiquitin) cross-link. A helical transmembrane segment spans residues 71 to 91; that stretch reads DIFAKYLKFIGPGLMVSVAYI. Residues 92 to 108 lie on the Cytoplasmic side of the membrane; sequence DPGNYSTAVDAGASNQF. The helical transmembrane segment at 109–129 threads the bilayer; sequence SLLCIILLSNFIAIFLQCLCI. Residues 130–156 are Extracellular-facing; the sequence is KLGSVTGLDLSRACREYLPRWLNWTLY. The chain crosses the membrane as a helical span at residues 157–177; sequence FFAECAVIATDIAEVIGTAIA. Residues 178–179 are Cytoplasmic-facing; sequence LN. The chain crosses the membrane as a helical span at residues 180 to 200; it reads ILIKVPLPAGVAITVVDVFLI. The Extracellular segment spans residues 201–218; that stretch reads MFTYKPGASSIRFIRIFE. Residues 219-239 traverse the membrane as a helical segment; it reads CFVAVLVVGVCICFAIELAYI. Topologically, residues 240–266 are cytoplasmic; the sequence is PKSTSVKQVFRGFVPSAQMFDHNGIYT. A helical membrane pass occupies residues 267–287; sequence AISILGATVMPHSLFLGSALV. Residues 288 to 344 are Extracellular-facing; sequence QPRLLDYDVKHGNYTVSEEQDKVKKSKSTEEIMEEKYFNYRPTNAAIKYCMKYSMVE. The chain crosses the membrane as a helical span at residues 345-365; that stretch reads LSITLFTLALFVNCAILVVAG. Residues 366–396 are Cytoplasmic-facing; the sequence is STLYNSPEADGADLFTIHELLSRNLAPAAGT. A helical membrane pass occupies residues 397-417; it reads IFMLALLLSGQSAGVVCTMSG. Over 418-463 the chain is Extracellular; that stretch reads QIVSEGHINWKLQPWQRRLATRCISIIPCLVISICIGREALSKALN. A helical membrane pass occupies residues 464–484; the sequence is ASQVVLSIVLPFLVAPLIFFT. Residues 485-543 lie on the Cytoplasmic side of the membrane; sequence CKKSIMKTEITVDHTEEDSHNHQNNNDRSAGSVIEQDGSSGMEIENGKDVKIVYMANNW. The interval 498-517 is disordered; the sequence is HTEEDSHNHQNNNDRSAGSV. Residues 544–564 traverse the membrane as a helical segment; it reads IITVIAIIVWLFLSLLNVYAI. Over 565-575 the chain is Extracellular; that stretch reads VQLGMSHGDIS.

Belongs to the NRAMP family.

It localises to the cell membrane. It catalyses the reaction Mn(2+)(in) = Mn(2+)(out). Functionally, high-affinity manganese transporter involved in manganese uptake from the extracellular environment. Also contributes to cellular accumulation of other divalent metal ions such as cadmium, cobalt, copper, iron and nickel. The chain is Manganese transporter SMF1 (SMF1) from Saccharomyces cerevisiae (strain ATCC 204508 / S288c) (Baker's yeast).